A 235-amino-acid chain; its full sequence is Riboflavin kinase (235 aa).

The Mg(2+) site is built by T45 and N47. E140 (nucleophile) is an active-site residue.

This sequence belongs to the flavokinase family. Zn(2+) is required as a cofactor. The cofactor is Mg(2+).

It catalyses the reaction riboflavin + ATP = FMN + ADP + H(+). It functions in the pathway cofactor biosynthesis; FMN biosynthesis; FMN from riboflavin (ATP route): step 1/1. In terms of biological role, catalyzes the phosphorylation of riboflavin (vitamin B2) to form flavin mononucleotide (FMN) coenzyme. This chain is Riboflavin kinase (FMN1), found in Chaetomium globosum (strain ATCC 6205 / CBS 148.51 / DSM 1962 / NBRC 6347 / NRRL 1970) (Soil fungus).